Reading from the N-terminus, the 306-residue chain is MAAVDDLQFEEFGNAATSLTANPDATTVNIEDPGETPKHQSGSPRGSGREEDDELLGNDDSDKTELLAGQKKSSPFWTFEYYQTFFDVDTYQVFDRIKGSLLPIPGKNFVRLYIRSNPDLYGPFWICATLVFAIAISGNLSNFLIHLGEKTYRYVPEFRKVSIAATTIYAYAWLVPLALWGFLMWRNSKVMNIVSYSFLEIVCVYGYSLFIYIPTAILWIIPQKAVRWILVMIALGISGSVLAMTFWPAVREDNRRVALATIVTIVLLHMLLSVGCLAYFFDAPEMDHLPTTTATPNQTVAAAKSS.

Residues 1–119 lie on the Cytoplasmic side of the membrane; the sequence is MAAVDDLQFE…VRLYIRSNPD (119 aa). The tract at residues 14–62 is disordered; sequence NAATSLTANPDATTVNIEDPGETPKHQSGSPRGSGREEDDELLGNDDSD. The segment covering 15–29 has biased composition (polar residues); it reads AATSLTANPDATTVN. The segment covering 50-59 has biased composition (acidic residues); that stretch reads EEDDELLGND. A helical transmembrane segment spans residues 120 to 140; it reads LYGPFWICATLVFAIAISGNL. The Lumenal segment spans residues 141–162; it reads SNFLIHLGEKTYRYVPEFRKVS. Residues 163–183 form a helical membrane-spanning segment; that stretch reads IAATTIYAYAWLVPLALWGFL. Over 184–200 the chain is Cytoplasmic; that stretch reads MWRNSKVMNIVSYSFLE. A helical membrane pass occupies residues 201–221; it reads IVCVYGYSLFIYIPTAILWII. Residues 222-227 are Lumenal-facing; sequence PQKAVR. Residues 228–248 form a helical membrane-spanning segment; the sequence is WILVMIALGISGSVLAMTFWP. Residues 249 to 256 lie on the Cytoplasmic side of the membrane; it reads AVREDNRR. The helical transmembrane segment at 257-277 threads the bilayer; that stretch reads VALATIVTIVLLHMLLSVGCL. The Lumenal portion of the chain corresponds to 278–306; the sequence is AYFFDAPEMDHLPTTTATPNQTVAAAKSS. N-linked (GlcNAc...) asparagine glycosylation is present at asparagine 297.

It belongs to the YIP1 family. As to quaternary structure, interacts with YIPF6; this interaction may stabilize YIPF1. May also form a ternary complex with YIPF2 and YIPF6.

The protein localises to the golgi apparatus. Its subcellular location is the cis-Golgi network membrane. It is found in the trans-Golgi network membrane. The protein resides in the late endosome membrane. This is Protein YIPF1 (YIPF1) from Pongo abelii (Sumatran orangutan).